The chain runs to 61 residues: Insect toxin BsIT3 (61 aa).

The LCN-type CS-alpha/beta domain occupies 1-61; that stretch reads DGYILNSKGC…RWTSSKNKCN (61 aa). 4 cysteine pairs are disulfide-bonded: Cys10/Cys60, Cys14/Cys35, Cys21/Cys42, and Cys25/Cys44.

This sequence belongs to the long (4 C-C) scorpion toxin superfamily. Sodium channel inhibitor family. Beta subfamily. In terms of tissue distribution, expressed by the venom gland.

It localises to the secreted. Depressant insect beta-toxins cause a transient contraction paralysis followed by a slow flaccid paralysis. They bind voltage-independently at site-4 of sodium channels (Nav) and shift the voltage of activation toward more negative potentials thereby affecting sodium channel activation and promoting spontaneous and repetitive firing. This toxin is active only on insects. This chain is Insect toxin BsIT3, found in Hottentotta tamulus sindicus (Scorpion).